Reading from the N-terminus, the 1480-residue chain is MVALMDKIAQLFRNKQYSDLIQLIDKQLHAKNEPEALIFLYAIQGEISFKQKDWIQAFAAYEKAVAESKQKGLPTQVYAQIVQRQMIILLRLQMLDTAFGLFSENQSVSVDNVQVLAQLALLYLMCERYSEAEKLLSSIVESSTSNTITLSKQFKEDIGPFKELFGVLDTYDTFLATILNNLAICNSKLGNHTLAFDQFQQALDIIKDPEKITRPPLSPITVLFDNCVSTVDEDKEKALKVEHHMLTINESKENQEDDTVLSLLRDGCTLIPSSTLGTHLPLIIELHSTICYNIGKLELTLGNLDRSVNHFKKSIEYQPSFARYVALGLVYRDMRNFYDAAEMLTKAVDSCVGISNLCLGEVVYNLGILVSEELKMPYKSLQFFDEATVLFIRGEFSAGAILSRIMKANSLTTITTATAVSSDWEFIMAFLNTLYLDLCAFSKDQGFNVEAAFTGTNAISFNLPITEPQEKESPKSDKIASEKPLVESNPGRSRTPSSMNDVYMLSAENLSFSLLESSFAQKETITSRLFPTFQAETKRYLAILYTNLGLIYYRIGIPTYYKQARRCFEVAIWFDNDCVFAINYLSVLLLKENSKTLAIEGLLKCTRLFPEYYEPFYNLGNILKADEENKKALQYYSRAIELNPRFLDGYLARGVLYAELHRFETAYLDFSKCIELDPDNRHAFCNYIHMKQILGIFHNDTLDMRKISKIIDDYIHEYLTVQNAINKGVVLPSHPLPPIMPYHCYLYRLSSSQLRFICQRYSEQNVNWVKQNIDMMSTPLLDLSIHQRPMPPSIGLINSVSSSSQLQLSMLPLNQSAADSMVPLAMLTPGPTLCTAIGFQSIKSVIRDSQHITHGPIFSYDRALITLARSKHSSKCPISYIDIVNLKSPLRLGVLCDDINSIPIGCILESWLRNIDPKVASLSIYSTVASDKSALRTSLEAHCSNFIDFTNYKYQNNPFLCAQRINGDGICIMISMCQHNCGLEGRILAMRPAPIQISYWTHGGTTNSNYLDYILADQYCIPPGYAHLYSEHVITMPGCFICPSHSMHYSNAILLEEHADILKVTVEEVRSLIQDSKPDIDVNHHSAAGENILSLDGSDATSSSVDSGIGSRTHSEAPIGGGDKDEGAHSSKILELELELAEIAKMKGETKNGVSTNSASEGRDELLMNDRILITGDNVFFQVQPIRNGRLVGGRDRSMIKKMEPLLKAIYPLQRIASEAAVPASMEKSENNSDLTSHRVCLELPLYRKNIRALYGIPANCFLFCTFNQVYKFDMGTLGIIAALLRSVPNAYYALLKFPPASQLHIEAFFRHKAPDILDRVIFLSMLPMKVEHIRRYLAVDVFVDTLKCNGSTIVLDALWSGVPVVGFVGEYILSRKTLSFLSVLECKDLICASQGEAVLLCTRLAVDSGYYFSVRKRILKNRSNLFNISRWCDNFVLTMMLAYKNWIFGGKPTSFSTERVIANVKSQGFSWPLKSTGAQ.

TPR repeat units lie at residues 38 to 71 (IFLY…SKQK), 113 to 146 (VQVL…STSN), 176 to 209 (ATIL…IKDP), and 288 to 321 (STIC…QPSF). The segment covering 468–485 (PQEKESPKSDKIASEKPL) has biased composition (basic and acidic residues). Residues 468–497 (PQEKESPKSDKIASEKPLVESNPGRSRTPS) are disordered. TPR repeat units lie at residues 613–646 (YEPF…NPRF) and 648–680 (DGYL…DPDN). A disordered region spans residues 1093 to 1128 (LSLDGSDATSSSVDSGIGSRTHSEAPIGGGDKDEGA). Positions 1099 to 1112 (DATSSSVDSGIGSR) are enriched in polar residues. UDP contacts are provided by residues Q1269, K1272, 1333–1336 (HIRR), 1351–1353 (GST), and D1357.

The protein belongs to the glycosyltransferase 41 family. O-GlcNAc transferase subfamily.

The protein resides in the cytoplasm. It localises to the nucleus. The catalysed reaction is L-seryl-[protein] + UDP-N-acetyl-alpha-D-glucosamine = 3-O-(N-acetyl-beta-D-glucosaminyl)-L-seryl-[protein] + UDP + H(+). The enzyme catalyses L-threonyl-[protein] + UDP-N-acetyl-alpha-D-glucosamine = 3-O-(N-acetyl-beta-D-glucosaminyl)-L-threonyl-[protein] + UDP + H(+). Its pathway is protein modification; protein glycosylation. Functionally, catalyzes the transfer of a single N-acetylglucosamine from UDP-GlcNAc to a serine or threonine residue in cytoplasmic and nuclear proteins resulting in their modification with a beta-linked N-acetylglucosamine (O-GlcNAc). This Giardia intestinalis (strain ATCC 50803 / WB clone C6) (Giardia lamblia) protein is UDP-N-acetylglucosamine--peptide N-acetylglucosaminyltransferase.